A 211-amino-acid chain; its full sequence is uncharacterized protein (211 aa).

This is an uncharacterized protein from Homo sapiens (Human).